The following is a 251-amino-acid chain: DNA repair protein RecO (251 aa).

Belongs to the RecO family.

Involved in DNA repair and RecF pathway recombination. In Streptococcus mutans serotype c (strain ATCC 700610 / UA159), this protein is DNA repair protein RecO.